Reading from the N-terminus, the 342-residue chain is S-adenosylmethionine:tRNA ribosyltransferase-isomerase (342 aa).

It belongs to the QueA family. In terms of assembly, monomer.

The protein resides in the cytoplasm. It catalyses the reaction 7-aminomethyl-7-carbaguanosine(34) in tRNA + S-adenosyl-L-methionine = epoxyqueuosine(34) in tRNA + adenine + L-methionine + 2 H(+). The protein operates within tRNA modification; tRNA-queuosine biosynthesis. In terms of biological role, transfers and isomerizes the ribose moiety from AdoMet to the 7-aminomethyl group of 7-deazaguanine (preQ1-tRNA) to give epoxyqueuosine (oQ-tRNA). This is S-adenosylmethionine:tRNA ribosyltransferase-isomerase from Geobacillus kaustophilus (strain HTA426).